Consider the following 205-residue polypeptide: Urease accessory protein UreE (205 aa).

Positions 171–205 are disordered; that stretch reads AHEAHPHAHSHAGGHGHVHSGHGHGGKHGEHDAES. The span at 177-196 shows a compositional bias: basic residues; the sequence is HAHSHAGGHGHVHSGHGHGG.

Belongs to the UreE family.

It localises to the cytoplasm. Its function is as follows. Involved in urease metallocenter assembly. Binds nickel. Probably functions as a nickel donor during metallocenter assembly. The protein is Urease accessory protein UreE of Bordetella parapertussis (strain 12822 / ATCC BAA-587 / NCTC 13253).